The following is a 328-amino-acid chain: Tetraacyldisaccharide 4'-kinase (328 aa).

Residue 55–62 (TAGGNGKT) coordinates ATP.

It belongs to the LpxK family.

The enzyme catalyses a lipid A disaccharide + ATP = a lipid IVA + ADP + H(+). The protein operates within glycolipid biosynthesis; lipid IV(A) biosynthesis; lipid IV(A) from (3R)-3-hydroxytetradecanoyl-[acyl-carrier-protein] and UDP-N-acetyl-alpha-D-glucosamine: step 6/6. Transfers the gamma-phosphate of ATP to the 4'-position of a tetraacyldisaccharide 1-phosphate intermediate (termed DS-1-P) to form tetraacyldisaccharide 1,4'-bis-phosphate (lipid IVA). The chain is Tetraacyldisaccharide 4'-kinase from Escherichia coli O157:H7.